The primary structure comprises 511 residues: Sodium/proline symporter (511 aa).

13 consecutive transmembrane segments (helical) span residues 16 to 36, 54 to 74, 85 to 105, 139 to 159, 175 to 195, 199 to 219, 246 to 266, 284 to 304, 327 to 347, 381 to 401, 407 to 427, 438 to 458, and 467 to 487; these read WQTY…GFYG, IGPY…WMIM, LSAI…YFVV, IISG…GFVS, GLLI…YLAV, DFFQ…VALL, VLGI…PHII, LGIS…LTGI, ILFH…AIMS, FVLI…TIAW, ILNL…PLVL, AGAI…ISWI, and FFGM…TYIV.

It belongs to the sodium:solute symporter (SSF) (TC 2.A.21) family.

The protein localises to the cell membrane. The catalysed reaction is L-proline(in) + Na(+)(in) = L-proline(out) + Na(+)(out). Catalyzes the sodium-dependent uptake of extracellular L-proline. The chain is Sodium/proline symporter (putP) from Staphylococcus epidermidis (strain ATCC 35984 / DSM 28319 / BCRC 17069 / CCUG 31568 / BM 3577 / RP62A).